A 259-amino-acid polypeptide reads, in one-letter code: Global transcriptional regulator CodY (259 aa).

The interval 1 to 155 (MNLLEKTRKI…GATVVGMEIL (155 aa)) is GAF domain. A DNA-binding region (H-T-H motif) is located at residues 203–222 (ASKIADRVGITRSVIVNALR). Residue S215 is modified to Phosphoserine.

The protein belongs to the CodY family.

The protein localises to the cytoplasm. Its function is as follows. DNA-binding global transcriptional regulator which is involved in the adaptive response to starvation and acts by directly or indirectly controlling the expression of numerous genes in response to nutrient availability. During rapid exponential growth, CodY is highly active and represses genes whose products allow adaptation to nutrient depletion. The chain is Global transcriptional regulator CodY from Geobacillus kaustophilus (strain HTA426).